A 163-amino-acid chain; its full sequence is N5-carboxyaminoimidazole ribonucleotide mutase (163 aa).

Substrate contacts are provided by Ser11, Asp14, and Arg41.

This sequence belongs to the AIR carboxylase family. Class I subfamily.

It catalyses the reaction 5-carboxyamino-1-(5-phospho-D-ribosyl)imidazole + H(+) = 5-amino-1-(5-phospho-D-ribosyl)imidazole-4-carboxylate. The protein operates within purine metabolism; IMP biosynthesis via de novo pathway; 5-amino-1-(5-phospho-D-ribosyl)imidazole-4-carboxylate from 5-amino-1-(5-phospho-D-ribosyl)imidazole (N5-CAIR route): step 2/2. In terms of biological role, catalyzes the conversion of N5-carboxyaminoimidazole ribonucleotide (N5-CAIR) to 4-carboxy-5-aminoimidazole ribonucleotide (CAIR). This chain is N5-carboxyaminoimidazole ribonucleotide mutase, found in Pseudomonas aeruginosa (strain ATCC 15692 / DSM 22644 / CIP 104116 / JCM 14847 / LMG 12228 / 1C / PRS 101 / PAO1).